We begin with the raw amino-acid sequence, 37 residues long: Large ribosomal subunit protein bL36 (37 aa).

It belongs to the bacterial ribosomal protein bL36 family.

The chain is Large ribosomal subunit protein bL36 from Persephonella marina (strain DSM 14350 / EX-H1).